A 206-amino-acid polypeptide reads, in one-letter code: Elongation factor 1-beta (206 aa).

An N-acetylalanine modification is found at Ala-2. Lys-13 participates in a covalent cross-link: Glycyl lysine isopeptide (Lys-Gly) (interchain with G-Cter in ubiquitin). Residues Ser-31 and Ser-86 each carry the phosphoserine modification.

The protein belongs to the EF-1-beta/EF-1-delta family. In terms of assembly, the eukaryotic elongation factor 1 complex (eEF1) is probably a heterohexamer. Two trimeric complexes, each composed of eEF1A (TEF1 or TEF2), eEF1Balpha (EFB1) and eEF1Bgamma (CAM1 or TEF4), are probably dimerized via the eF1Bgamma subunits. eEF1Balpha interacts directly with eEF1A. eEF1Balpha and eEF1Bgamma form the eEF1B subcomplex with the GEF activity. Post-translationally, S-thiolated in response to oxidative stress, probably inhibiting the protein and causing a reduction in protein synthesis.

It participates in protein biosynthesis; polypeptide chain elongation. Catalytic subunit of the guanine nucleotide exchange factor (GEF) (eEF1B subcomplex) of the eukaryotic elongation factor 1 complex (eEF1). Stimulates the exchange of GDP for GTP on elongation factor 1A (eEF1A), probably by displacing GDP from the nucleotide binding pocket in eEF1A. The 30-fold higher concentration of GTP compared to GDP in cells favors the formation of eEF1A-GTP, which rapidly forms a ternary complex with aminoacyl-tRNA that in turn displaces eEF1B from the complex. The chain is Elongation factor 1-beta (EFB1) from Saccharomyces cerevisiae (strain ATCC 204508 / S288c) (Baker's yeast).